We begin with the raw amino-acid sequence, 96 residues long: Co-chaperonin GroES (96 aa).

The protein belongs to the GroES chaperonin family. In terms of assembly, heptamer of 7 subunits arranged in a ring. Interacts with the chaperonin GroEL.

It localises to the cytoplasm. In terms of biological role, together with the chaperonin GroEL, plays an essential role in assisting protein folding. The GroEL-GroES system forms a nano-cage that allows encapsulation of the non-native substrate proteins and provides a physical environment optimized to promote and accelerate protein folding. GroES binds to the apical surface of the GroEL ring, thereby capping the opening of the GroEL channel. This chain is Co-chaperonin GroES, found in Cupriavidus taiwanensis (strain DSM 17343 / BCRC 17206 / CCUG 44338 / CIP 107171 / LMG 19424 / R1) (Ralstonia taiwanensis (strain LMG 19424)).